Reading from the N-terminus, the 247-residue chain is Chromosome partition protein MukE (247 aa).

A disordered region spans residues alanine 213–alanine 247. Over residues glutamine 217–methionine 227 the composition is skewed to basic and acidic residues. Residues glutamine 236–alanine 247 are compositionally biased toward acidic residues.

It belongs to the MukE family. As to quaternary structure, interacts, and probably forms a ternary complex, with MukF and MukB. The complex formation is stimulated by calcium or magnesium.

Its subcellular location is the cytoplasm. The protein localises to the nucleoid. In terms of biological role, involved in chromosome condensation, segregation and cell cycle progression. May participate in facilitating chromosome segregation by condensation DNA from both sides of a centrally located replisome during cell division. Probably acts via its interaction with MukB and MukF. This chain is Chromosome partition protein MukE, found in Histophilus somni (strain 2336) (Haemophilus somnus).